We begin with the raw amino-acid sequence, 42 residues long: Large ribosomal subunit protein bL36 (42 aa).

Belongs to the bacterial ribosomal protein bL36 family.

The protein is Large ribosomal subunit protein bL36 of Ehrlichia ruminantium (strain Gardel).